We begin with the raw amino-acid sequence, 369 residues long: 4-hydroxy-3-methylbut-2-en-1-yl diphosphate synthase (flavodoxin) (369 aa).

Cys-268, Cys-271, Cys-303, and Glu-310 together coordinate [4Fe-4S] cluster.

It belongs to the IspG family. [4Fe-4S] cluster is required as a cofactor.

It catalyses the reaction (2E)-4-hydroxy-3-methylbut-2-enyl diphosphate + oxidized [flavodoxin] + H2O + 2 H(+) = 2-C-methyl-D-erythritol 2,4-cyclic diphosphate + reduced [flavodoxin]. It participates in isoprenoid biosynthesis; isopentenyl diphosphate biosynthesis via DXP pathway; isopentenyl diphosphate from 1-deoxy-D-xylulose 5-phosphate: step 5/6. Its function is as follows. Converts 2C-methyl-D-erythritol 2,4-cyclodiphosphate (ME-2,4cPP) into 1-hydroxy-2-methyl-2-(E)-butenyl 4-diphosphate. In Exiguobacterium sibiricum (strain DSM 17290 / CCUG 55495 / CIP 109462 / JCM 13490 / 255-15), this protein is 4-hydroxy-3-methylbut-2-en-1-yl diphosphate synthase (flavodoxin).